We begin with the raw amino-acid sequence, 137 residues long: uncharacterized protein (137 aa).

The signal sequence occupies residues 1–34; it reads MAALSRALGPLRTPAPPLWIGLFLVATGSQQSLA. Polar residues predominate over residues 33–45; that stretch reads LAQPLPGNTTEAT. Disordered regions lie at residues 33–54 and 98–137; these read LAQP…ASGS and VLSP…LGAS. The N-linked (GlcNAc...) asparagine glycan is linked to Asn-40. A compositionally biased stretch (basic and acidic residues) spans 121 to 137; sequence KLKEPQPQDHKPGLGAS.

Its subcellular location is the secreted. This is an uncharacterized protein from Homo sapiens (Human).